A 550-amino-acid polypeptide reads, in one-letter code: Chaperonin GroEL (550 aa).

ATP contacts are provided by residues 30–33 (TLGP), lysine 51, 87–91 (DGTTT), glycine 415, 479–481 (NAA), and aspartate 495.

Belongs to the chaperonin (HSP60) family. As to quaternary structure, forms a cylinder of 14 subunits composed of two heptameric rings stacked back-to-back. Interacts with the co-chaperonin GroES.

It localises to the cytoplasm. It catalyses the reaction ATP + H2O + a folded polypeptide = ADP + phosphate + an unfolded polypeptide.. In terms of biological role, together with its co-chaperonin GroES, plays an essential role in assisting protein folding. The GroEL-GroES system forms a nano-cage that allows encapsulation of the non-native substrate proteins and provides a physical environment optimized to promote and accelerate protein folding. This is Chaperonin GroEL from Polaromonas sp. (strain JS666 / ATCC BAA-500).